The following is a 382-amino-acid chain: Gap junction alpha-1 protein (382 aa).

The Cytoplasmic segment spans residues 2-23 (GDWSALGKLLDKVQAYSTAGGK). Serine 5 carries the phosphoserine modification. A helical transmembrane segment spans residues 24-44 (VWLSVLFIFRILLLGTAVESA). Over 45–76 (WGDEQSAFRCNTQQPGCENVCYDKSFPISHVR) the chain is Extracellular. Intrachain disulfides connect cysteine 54–cysteine 192 and cysteine 187–cysteine 198. The chain crosses the membrane as a helical span at residues 77-97 (FWVLQIIFVSVPTLLYLAHVF). Topologically, residues 98-155 (YVMRKEEKLNKKEEELKVAQTDGVNVEMHLKQIEIKKFKYGIEEHGKVKMRGGLLRTY) are cytoplasmic. A Glycyl lysine isopeptide (Lys-Gly) (interchain with G-Cter in SUMO) cross-link involves residue lysine 144. The chain crosses the membrane as a helical span at residues 156–176 (IISILFKSIFEVAFLLIQWYI). Topologically, residues 177–207 (YGFSLSAVYTCKRDPCPHQVDCFLSRPTEKT) are extracellular. A helical membrane pass occupies residues 208 to 228 (IFIIFMLVVSLVSLALNIIEL). At 229 to 382 (FYVFFKGVKD…SRPRPDDLEI (154 aa)) the chain is on the cytoplasmic side. Lysine 237 participates in a covalent cross-link: Glycyl lysine isopeptide (Lys-Gly) (interchain with G-Cter in SUMO). Residues 244–382 (SDPYHTTSGA…SRPRPDDLEI (139 aa)) are interaction with NOV. A Phosphotyrosine modification is found at tyrosine 247. Phosphoserine is present on residues serine 255 and serine 262. The interaction with UBQLN4 stretch occupies residues 264 to 382 (KYAYFNGCSS…SRPRPDDLEI (119 aa)). The residue at position 271 (cysteine 271) is an S-nitrosocysteine. At threonine 275 the chain carries Phosphothreonine. Residues serine 306 and serine 314 each carry the phosphoserine modification. Residues 317–332 (QNRMGQAGSTISNSHA) show a composition bias toward polar residues. Residues 317–382 (QNRMGQAGST…SRPRPDDLEI (66 aa)) are disordered. Serine 325 bears the Phosphoserine; by CK1 mark. The residue at position 326 (threonine 326) is a Phosphothreonine. Residues serine 328 and serine 330 each carry the phosphoserine; by CK1 modification. Residues serine 344 and serine 365 each carry the phosphoserine modification. The segment covering 362–374 (RPSSRASSRASSR) has biased composition (low complexity). Serine 368 carries the phosphoserine; by PKC/PRKCG and PKC/PRKCD modification. A phosphoserine mark is found at serine 369 and serine 373.

Belongs to the connexin family. Alpha-type (group II) subfamily. As to quaternary structure, a connexon is composed of a hexamer of connexins. Interacts with SGSM3. Interacts with RIC1/CIP150. Interacts with CNST and CSNK1D. Interacts (via C-terminus) with TJP1. Interacts (via C-terminus) with SRC (via SH3 domain). Interacts (not ubiquitinated) with UBQLN4 (via UBA domain). Interacts with NOV. Interacts with TMEM65. Interacts with ANK3/ANKG and PKP2. Phosphorylation at Ser-325, Ser-328 and Ser-330 by CK1 modulates gap junction assembly. Phosphorylated at Ser-368 by PRKCG; phosphorylation induces disassembly of gap junction plaques and inhibition of gap junction activity. Phosphorylation at Ser-368 by PRKCD triggers its internalization into small vesicles leading to proteasome-mediated degradation. In terms of processing, sumoylated with SUMO1, SUMO2 and SUMO3, which may regulate the level of functional Cx43 gap junctions at the plasma membrane. May be desumoylated by SENP1 or SENP2. Post-translationally, S-nitrosylation at Cys-271 is enriched at the muscle endothelial gap junction in arteries, it augments channel permeability and may regulate of smooth muscle cell to endothelial cell communication. Acetylated in the developing cortex; leading to delocalization from the cell membrane.

The protein resides in the cell membrane. The protein localises to the cell junction. Its subcellular location is the gap junction. It is found in the endoplasmic reticulum. Gap junction protein that acts as a regulator of bladder capacity. A gap junction consists of a cluster of closely packed pairs of transmembrane channels, the connexons, through which materials of low MW diffuse from one cell to a neighboring cell. May play a critical role in the physiology of hearing by participating in the recycling of potassium to the cochlear endolymph. Negative regulator of bladder functional capacity: acts by enhancing intercellular electrical and chemical transmission, thus sensitizing bladder muscles to cholinergic neural stimuli and causing them to contract. May play a role in cell growth inhibition through the regulation of NOV expression and localization. Plays an essential role in gap junction communication in the ventricles. The sequence is that of Gap junction alpha-1 protein (GJA1) from Chlorocebus aethiops (Green monkey).